Here is a 365-residue protein sequence, read N- to C-terminus: Glial fibrillary acidic protein (365 aa).

A head region spans residues 1–5 (REVDR). The 309-residue stretch at 2–310 (EVDRVMGLND…KLLEGEESRI (309 aa)) folds into the IF rod domain. The segment at 6-37 (VMGLNDRFASYIEKVRFLEQQNKMLVAELNQL) is coil 1A. The tract at residues 38-48 (RGKEPSRLGDI) is linker 1. A coil 1B region spans residues 49 to 147 (YQEELRELRR…EEEMRQLQEQ (99 aa)). Residues 148-163 (LIAQQVHVDLDVSKPD) form a linker 12 region. Residues 164–185 (LTTALKEIRAQFEAMATSNMQE) are coil 2A. The interval 186–189 (TEEW) is linker 2. The coil 2B stretch occupies residues 190-310 (YRSKFADLTD…KLLEGEESRI (121 aa)). Positions 311–365 (TVPVQNFTNLQFRDTSLDTKLTPEAHVKRSIVVRTVETRDGEIIKESTTERKDLP) are tail.

This sequence belongs to the intermediate filament family.

The chain is Glial fibrillary acidic protein (gfap) from Carassius auratus (Goldfish).